A 248-amino-acid polypeptide reads, in one-letter code: MILFPAIDLKGGQCVRLKLGDMQQATVYNTDPAAQAKSFEEQGFEWLHVVDLDGAFAGHSANGDAVEAILKATKNPVQLGGGIRTLDHIEAWLARGLRRVILGTVAVRNPDLVIEACRKFPGHVAVGIDAKGGKVAVEGWAEASELGVIELAQKFEGAGVSAIIYTDIDRDGILAGINWASTLALAGAVSIPVIASGGLASLDDVRRMLEPDARKLEGAISGRALYDGRIDPRQALALIKASRAKETA.

The active-site Proton acceptor is D8. D129 acts as the Proton donor in catalysis.

Belongs to the HisA/HisF family.

The protein localises to the cytoplasm. It catalyses the reaction 1-(5-phospho-beta-D-ribosyl)-5-[(5-phospho-beta-D-ribosylamino)methylideneamino]imidazole-4-carboxamide = 5-[(5-phospho-1-deoxy-D-ribulos-1-ylimino)methylamino]-1-(5-phospho-beta-D-ribosyl)imidazole-4-carboxamide. The protein operates within amino-acid biosynthesis; L-histidine biosynthesis; L-histidine from 5-phospho-alpha-D-ribose 1-diphosphate: step 4/9. In Rhizobium etli (strain CIAT 652), this protein is 1-(5-phosphoribosyl)-5-[(5-phosphoribosylamino)methylideneamino] imidazole-4-carboxamide isomerase.